Consider the following 376-residue polypeptide: Partitioning defective 6 homolog gamma (376 aa).

Residues 18-98 enclose the PB1 domain; the sequence is AVEVKSKFGA…PLLRVFIQKR (81 aa). Residues 127-254 are interaction with PARD3 and CDC42; the sequence is RRRAHLDIGL…VTVKPANQRN (128 aa). One can recognise a Pseudo-CRIB domain in the interval 134 to 151; sequence IGLPRDFRPVSSIIDVDL. The region spanning 158–251 is the PDZ domain; the sequence is RVRLHRHGCE…NLIVTVKPAN (94 aa). Residues 356-376 are disordered; the sequence is PRHSLALPPGGVEEHGPAVTL. A compositionally biased stretch (basic and acidic residues) spans 367 to 376; sequence VEEHGPAVTL.

Belongs to the PAR6 family. Interacts with PARD3. Interacts with GTP-bound forms of CDC42, RHOQ/TC10 and RAC1. Interacts with the N-terminal part of PRKCI and PRKCZ. As to expression, widely expressed, with a higher expression in fetal and adult kidney.

It localises to the cytoplasm. The protein resides in the cell membrane. The protein localises to the cell junction. Its subcellular location is the tight junction. Its function is as follows. Adapter protein involved in asymmetrical cell division and cell polarization processes. May play a role in the formation of epithelial tight junctions. The PARD6-PARD3 complex links GTP-bound Rho small GTPases to atypical protein kinase C proteins. The protein is Partitioning defective 6 homolog gamma (PARD6G) of Homo sapiens (Human).